A 213-amino-acid chain; its full sequence is ATP synthase peripheral stalk subunit OSCP, mitochondrial (213 aa).

The transit peptide at 1 to 23 (MAAPAVSGLSRQVRCFSTSVVRP) directs the protein to the mitochondrion. The SIFI-degron signature appears at 5–23 (AVSGLSRQVRCFSTSVVRP). An N6-acetyllysine mark is found at Lys-54, Lys-60, Lys-70, and Lys-73. Lys-90 carries the post-translational modification N6-succinyllysine. 2 positions are modified to N6-acetyllysine; alternate: Lys-158 and Lys-162. Residues Lys-158 and Lys-162 each carry the N6-succinyllysine; alternate modification. An N6-acetyllysine mark is found at Lys-172, Lys-176, and Lys-192. N6-succinyllysine is present on Lys-199.

The protein belongs to the ATPase delta chain family. Component of the ATP synthase complex composed at least of ATP5F1A/subunit alpha, ATP5F1B/subunit beta, ATP5MC1/subunit c (homooctomer), MT-ATP6/subunit a, MT-ATP8/subunit 8, ATP5ME/subunit e, ATP5MF/subunit f, ATP5MG/subunit g, ATP5MK/subunit k, ATP5MJ/subunit j, ATP5F1C/subunit gamma, ATP5F1D/subunit delta, ATP5F1E/subunit epsilon, ATP5PF/subunit F6, ATP5PB/subunit b, ATP5PD/subunit d, ATP5PO/subunit OSCP. ATP synthase complex consists of a soluble F(1) head domain (subunits alpha(3) and beta(3)) - the catalytic core - and a membrane F(0) domain - the membrane proton channel (subunits c, a, 8, e, f, g, k and j). These two domains are linked by a central stalk (subunits gamma, delta, and epsilon) rotating inside the F1 region and a stationary peripheral stalk (subunits F6, b, d, and OSCP). In terms of processing, acetylation at Lys-162 decreases ATP production. Deacetylated by SIRT3. Post-translationally, in response to mitochondrial stress, the precursor protein is ubiquitinated by the SIFI complex in the cytoplasm before mitochondrial import, leading to its degradation. Within the SIFI complex, UBR4 initiates ubiquitin chain that are further elongated or branched by KCMF1.

The protein resides in the mitochondrion. Its subcellular location is the mitochondrion inner membrane. Its function is as follows. Subunit OSCP, of the mitochondrial membrane ATP synthase complex (F(1)F(0) ATP synthase or Complex V) that produces ATP from ADP in the presence of a proton gradient across the membrane which is generated by electron transport complexes of the respiratory chain. ATP synthase complex consist of a soluble F(1) head domain - the catalytic core - and a membrane F(1) domain - the membrane proton channel. These two domains are linked by a central stalk rotating inside the F(1) region and a stationary peripheral stalk. During catalysis, ATP synthesis in the catalytic domain of F(1) is coupled via a rotary mechanism of the central stalk subunits to proton translocation. In vivo, can only synthesize ATP although its ATP hydrolase activity can be activated artificially in vitro. Part of the complex F(0) domain. Part of the complex F(0) domain and the peripheric stalk, which acts as a stator to hold the catalytic alpha(3)beta(3) subcomplex and subunit a/ATP6 static relative to the rotary elements. The protein is ATP synthase peripheral stalk subunit OSCP, mitochondrial of Homo sapiens (Human).